The following is a 201-amino-acid chain: Putative 3-methyladenine DNA glycosylase (201 aa).

The protein belongs to the DNA glycosylase MPG family.

The chain is Putative 3-methyladenine DNA glycosylase from Nitrosococcus oceani (strain ATCC 19707 / BCRC 17464 / JCM 30415 / NCIMB 11848 / C-107).